A 152-amino-acid chain; its full sequence is AIG2-like protein D (152 aa).

Residue 13–18 participates in substrate binding; the sequence is YGSLMA. Residue Glu-81 is the Proton acceptor of the active site.

The protein belongs to the gamma-glutamylcyclotransferase family. Expressed mainly in leaves.

In terms of biological role, putative gamma-glutamylcyclotransferase. This chain is AIG2-like protein D, found in Arabidopsis thaliana (Mouse-ear cress).